The chain runs to 213 residues: Thiopurine S-methyltransferase (213 aa).

S-adenosyl-L-methionine is bound by residues tryptophan 10, leucine 45, glutamate 66, and arginine 121.

This sequence belongs to the class I-like SAM-binding methyltransferase superfamily. TPMT family.

The protein resides in the cytoplasm. It carries out the reaction S-adenosyl-L-methionine + a thiopurine = S-adenosyl-L-homocysteine + a thiopurine S-methylether.. This Aliivibrio fischeri (strain ATCC 700601 / ES114) (Vibrio fischeri) protein is Thiopurine S-methyltransferase.